The primary structure comprises 88 residues: Small ribosomal subunit protein bS20 (88 aa).

A disordered region spans residues 1–27 (MANIKSQIKRNKTNEKARLRNKAVKSS).

The protein belongs to the bacterial ribosomal protein bS20 family.

Functionally, binds directly to 16S ribosomal RNA. This Streptomyces griseus subsp. griseus (strain JCM 4626 / CBS 651.72 / NBRC 13350 / KCC S-0626 / ISP 5235) protein is Small ribosomal subunit protein bS20.